The chain runs to 403 residues: Myeloid cell surface antigen CD33 (403 aa).

An N-terminal signal peptide occupies residues 1–16 (MLWPLPLFLLCAGSLA). The Ig-like V-type domain occupies 17 to 120 (QDLEFQLVAP…DTGMYFFRVV (104 aa)). Over 18 to 240 (DLEFQLVAPE…VTRKSGQMRE (223 aa)) the chain is Extracellular. 3 cysteine pairs are disulfide-bonded: cysteine 36-cysteine 169, cysteine 41-cysteine 100, and cysteine 163-cysteine 212. N-linked (GlcNAc...) asparagine glycosylation is present at asparagine 110. Residue arginine 118 coordinates N-acetylneuraminate. The 84-residue stretch at 145-228 (PDIIIPGTLE…AGVTVERTIQ (84 aa)) folds into the Ig-like C2-type domain. An N-linked (GlcNAc...) asparagine glycan is attached at asparagine 160. The N-linked (GlcNAc...) asparagine glycan is linked to asparagine 230. A helical transmembrane segment spans residues 241–267 (LVLVAVGEATVKLLILGLCLVFLIVMF). Residues 268–403 (CRRKTTKLSV…MLLCVSLTLS (136 aa)) are Cytoplasmic-facing.

The protein belongs to the immunoglobulin superfamily. SIGLEC (sialic acid binding Ig-like lectin) family. As to quaternary structure, homodimer; disulfide-linked. Interacts with PTPN6/SHP-1 and PTPN11/SHP-2 upon phosphorylation. Interacts with C1QA (via C-terminus); this interaction activates CD33 inhibitory motifs. Glycosylated. Post-translationally, phosphorylation is involved in binding to PTPN6 and PTPN11. Expressed on myeloid precursors in the bone marrow. In the peripheral blood, mostly expressed on granulocytes.

The protein localises to the cell membrane. Sialic-acid-binding immunoglobulin-like lectin (Siglec) that plays a role in mediating cell-cell interactions and in maintaining immune cells in a resting state. Preferentially binds sialic acid to the short O-linked glycans of certain mucins. The chain is Myeloid cell surface antigen CD33 (Cd33) from Mus musculus (Mouse).